Consider the following 302-residue polypeptide: Protoheme IX farnesyltransferase 1 (302 aa).

Helical transmembrane passes span 27 to 47 (VVALMLVTAIVGMSLAPVTDF), 49 to 69 (WIQASIGLIGIGLMAGSAAAF), 98 to 118 (SVAIFAVAIGVVGFVLLYAWV), 121 to 141 (LTAWMTFLSLLGYAVVYTMYL), 149 to 169 (IVIAGIAGAMPPLLGWTAVTG), 175 to 195 (AWLLVMIIFIWTPPHFWALAI), 228 to 248 (LLTLVCVMPVLVGMVGFIYLF), and 281 to 301 (IYHLLALFVALLADHYIGMVL).

Belongs to the UbiA prenyltransferase family. Protoheme IX farnesyltransferase subfamily.

Its subcellular location is the cell inner membrane. The enzyme catalyses heme b + (2E,6E)-farnesyl diphosphate + H2O = Fe(II)-heme o + diphosphate. It participates in porphyrin-containing compound metabolism; heme O biosynthesis; heme O from protoheme: step 1/1. In terms of biological role, converts heme B (protoheme IX) to heme O by substitution of the vinyl group on carbon 2 of heme B porphyrin ring with a hydroxyethyl farnesyl side group. The protein is Protoheme IX farnesyltransferase 1 of Vibrio parahaemolyticus serotype O3:K6 (strain RIMD 2210633).